The chain runs to 155 residues: Small ribosomal subunit protein uS7cz/uS7cy (155 aa).

The protein belongs to the universal ribosomal protein uS7 family. Part of the 30S ribosomal subunit.

It localises to the plastid. Its subcellular location is the chloroplast. One of the primary rRNA binding proteins, it binds directly to 16S rRNA where it nucleates assembly of the head domain of the 30S subunit. The sequence is that of Small ribosomal subunit protein uS7cz/uS7cy (rps7-A) from Phalaenopsis aphrodite subsp. formosana (Moth orchid).